The primary structure comprises 353 residues: Protein RecA (353 aa).

Residue 67–74 (GPESSGKT) coordinates ATP.

It belongs to the RecA family.

It is found in the cytoplasm. In terms of biological role, can catalyze the hydrolysis of ATP in the presence of single-stranded DNA, the ATP-dependent uptake of single-stranded DNA by duplex DNA, and the ATP-dependent hybridization of homologous single-stranded DNAs. It interacts with LexA causing its activation and leading to its autocatalytic cleavage. The sequence is that of Protein RecA from Chlamydia pneumoniae (Chlamydophila pneumoniae).